Reading from the N-terminus, the 842-residue chain is Elongation factor 2 (842 aa).

One can recognise a tr-type G domain in the interval 17 to 346; sequence TNVRNMSVIA…MIVLHLPSPV (330 aa). GTP contacts are provided by residues 26–33, 158–161, and 213–215; these read AHVDHGKS, NKVD, and SGL. K509 is subject to N6,N6,N6-trimethyllysine; by EFM3; alternate. N6,N6-dimethyllysine; by EFM3; alternate is present on K509. K509 is modified (N6-methyllysine; by EFM3; alternate). At S579 the chain carries Phosphoserine. N6,N6-dimethyllysine; by EFM2; alternate is present on K613. The residue at position 613 (K613) is an N6-methyllysine; by EFM2; alternate. H699 carries the diphthamide modification. Phosphothreonine is present on residues T713 and T763. A Glycyl lysine isopeptide (Lys-Gly) (interchain with G-Cter in ubiquitin) cross-link involves residue K841.

It belongs to the TRAFAC class translation factor GTPase superfamily. Classic translation factor GTPase family. EF-G/EF-2 subfamily. In terms of assembly, binds to 80S ribosomes. Actively translating ribosomes show mutually exclusive binding of eIF5a (HYP2 or ANB1) and EFT1/eEF2. Interacts with the 40S ribosomal subunit protein RPL9A; the interaction is direct. Interacts with the 60S ribosomal subunit proteins RPL12A; the interaction is direct. Interacts with RPS23A; the interaction is direct. Interacts with 18S rRNA; the interaction is direct. Interacts with 25S rRNA; the interaction is direct. Interacts with RPL0. Interacts with STM1; promoting ribosome inactivation. Post-translationally, (Microbial infection) Diphthamide can be ADP-ribosylated by diphtheria toxin and by Pseudomonas exotoxin A, thus abolishing its function.

It is found in the cytoplasm. The catalysed reaction is GTP + H2O = GDP + phosphate + H(+). It functions in the pathway protein biosynthesis; polypeptide chain elongation. With respect to regulation, inhibited by fusidic acid and sordarin, which prevent the release of eEF2 from the ribosome after the translocation step. While fusidic acid acts on all eukaryotic eEF2, sordarin specifically binds and inhibits only selected fungal eEF2. Catalyzes the GTP-dependent ribosomal translocation step during translation elongation. During this step, the ribosome changes from the pre-translocational (PRE) to the post-translocational (POST) state as the newly formed A-site-bound peptidyl-tRNA and P-site-bound deacylated tRNA move to the P and E sites, respectively. Catalyzes the coordinated movement of the two tRNA molecules, the mRNA and conformational changes in the ribosome. This is Elongation factor 2 (EFT1) from Saccharomyces cerevisiae (strain ATCC 204508 / S288c) (Baker's yeast).